We begin with the raw amino-acid sequence, 207 residues long: Protein N-terminal glutamine amidohydrolase (207 aa).

Active-site residues include Cys-30, His-83, and Asp-99.

Belongs to the NTAQ1 family. Monomer.

It is found in the cytoplasm. It localises to the cytosol. The protein localises to the nucleus. The enzyme catalyses N-terminal L-glutaminyl-[protein] + H2O = N-terminal L-glutamyl-[protein] + NH4(+). Mediates the side-chain deamidation of N-terminal glutamine residues to glutamate, an important step in N-end rule pathway of protein degradation. Conversion of the resulting N-terminal glutamine to glutamate renders the protein susceptible to arginylation, polyubiquitination and degradation as specified by the N-end rule. Does not act on substrates with internal or C-terminal glutamine and does not act on non-glutamine residues in any position. Does not deaminate acetylated N-terminal glutamine. With the exception of proline, all tested second-position residues on substrate peptides do not greatly influence the activity. In contrast, a proline at position 2, virtually abolishes deamidation of N-terminal glutamine. The sequence is that of Protein N-terminal glutamine amidohydrolase (NTAQ1) from Bos taurus (Bovine).